The sequence spans 330 residues: Anthranilate phosphoribosyltransferase (330 aa).

5-phospho-alpha-D-ribose 1-diphosphate-binding positions include G75, G78 to D79, T83, N85 to T88, K103 to S111, and A115. An anthranilate-binding site is contributed by G75. S87 contributes to the Mg(2+) binding site. An anthranilate-binding site is contributed by N106. R161 is a binding site for anthranilate. Mg(2+) is bound by residues D220 and E221.

The protein belongs to the anthranilate phosphoribosyltransferase family. In terms of assembly, homodimer. The cofactor is Mg(2+).

The catalysed reaction is N-(5-phospho-beta-D-ribosyl)anthranilate + diphosphate = 5-phospho-alpha-D-ribose 1-diphosphate + anthranilate. It participates in amino-acid biosynthesis; L-tryptophan biosynthesis; L-tryptophan from chorismate: step 2/5. Its function is as follows. Catalyzes the transfer of the phosphoribosyl group of 5-phosphorylribose-1-pyrophosphate (PRPP) to anthranilate to yield N-(5'-phosphoribosyl)-anthranilate (PRA). The polypeptide is Anthranilate phosphoribosyltransferase (Erythrobacter litoralis (strain HTCC2594)).